Reading from the N-terminus, the 579-residue chain is Protein PLASTID MOVEMENT IMPAIRED 15 (579 aa).

Coiled coils occupy residues 90–161 (EVLK…NEEH), 188–216 (KVLDLLVERNKRIKNMLEEAERSKDIEIE), 383–419 (QKTKLDIDKKESELNSKLDELEKVKHTEALVLEKLES), and 481–501 (LMKTETLMRESEMTKAEEERE).

It belongs to the WEB family.

Its function is as follows. Required for the chloroplast avoidance response under high intensity blue light. This avoidance response consists in the relocation of chloroplasts on the anticlinal side of exposed cells. In Arabidopsis thaliana (Mouse-ear cress), this protein is Protein PLASTID MOVEMENT IMPAIRED 15 (PMI15).